The chain runs to 411 residues: Tyrosine--tRNA ligase (411 aa).

Tyr-34 contributes to the L-tyrosine binding site. A 'HIGH' region motif is present at residues 39–48 (CTATSLHIGS). L-tyrosine is bound by residues Tyr-171 and Gln-175. The 'KMSKS' region motif lies at 231 to 235 (KMGKT). Lys-234 is an ATP binding site. The region spanning 345–411 (ISAYELFHEA…GKKRHILVRV (67 aa)) is the S4 RNA-binding domain.

This sequence belongs to the class-I aminoacyl-tRNA synthetase family. TyrS type 1 subfamily. Homodimer.

The protein resides in the cytoplasm. It carries out the reaction tRNA(Tyr) + L-tyrosine + ATP = L-tyrosyl-tRNA(Tyr) + AMP + diphosphate + H(+). In terms of biological role, catalyzes the attachment of tyrosine to tRNA(Tyr) in a two-step reaction: tyrosine is first activated by ATP to form Tyr-AMP and then transferred to the acceptor end of tRNA(Tyr). The sequence is that of Tyrosine--tRNA ligase from Rickettsia massiliae (strain Mtu5).